The following is a 1071-amino-acid chain: Serine/threonine-protein phosphatase 6 regulatory ankyrin repeat subunit C (1071 aa).

28 ANK repeats span residues 7–36, 40–69, 73–102, 106–135, 139–168, 172–201, 205–234, 238–267, 271–301, 305–334, 338–367, 371–400, 422–451, 455–484, 488–539, 543–573, 578–607, 611–640, 645–674, 681–710, 714–743, 747–776, 784–814, 816–845, 852–881, 885–915, 919–951, and 955–984; these read SDQPPLVQAIFNRNADEVKLFLHKKDEVNA, ERRTPLHAAAWLGDVHIMDLLISAGANVNA, VWLTPLHRAAASRNERAVGLLLRKGADVTA, YWQTPLHIAAANRATRCVETLLPHVSSLNM, TGRAPLHHAAQSGYQEMVKLLLNKGANLSA, KDRQPIHWAAYLGHLEVVKLLVSQGSDKSC, RGYTPLHAAAASGHVDVVKYLLRNGAEIDE, FGNTALHVACYTGQEAVANELVNRGANVNQ, RGYTPLHLAAVSTNGALCLELLVNNGADVNM, EGKSPLHMAAIHGRFTRSQILIQNGGEIDC, YGNTPLHVAAKYGHELLISTLMTNGADTAR, HGMFPLHLAVLYGSSDCCRKLLSSGQLYSI, FGRTCLHAAASGGNIECLNLLLSSGADMNK, FGRTPLHYAAANGRYQCVVVLVGAGAEVNE, SGCT…DPCL, KGYSAVHYAAAHGNKQNLELLLEMCFNTLGD, GSISPLHLAVESGHWECVTVLIESGVCVDV, VGRSVLYLASQRGHSRCVELLLSQSASCLL, SKWGPLHVAAANGHSECLRMLLCSEGGADL, EGQTPLMLAVLGGHTDCVHLLLERGACPDM, RGRTALHRGAVMGREDCLTALLSHNVSVLS, QGRSALHLAASCGHADILSNLLSAADHSQP, HGYTPAHWAAYHGHEDCLEVLLELKPCSIQE, NPFTPLHCALINGHSGSAELLLESSVCNSL, KGRTPLHAAAVAEDVAGLQLVLRQGADIDA, SGRSALMVAADYGQSGAVALLLHRAKADLSL, NKNTALHLACSKAHEMCAMLILKEIHNPILINA, and MLQMPLHIAARNGLATVVQALLNRGATVLA.

Protein phosphatase 6 (PP6) holoenzyme is proposed to be a heterotrimeric complex formed by the catalytic subunit, a SAPS domain-containing subunit (PP6R) and an ankyrin repeat-domain containing regulatory subunit (ARS).

In terms of biological role, putative regulatory subunit of protein phosphatase 6 (PP6) that may be involved in the recognition of phosphoprotein substrates. The polypeptide is Serine/threonine-protein phosphatase 6 regulatory ankyrin repeat subunit C (ankrd52) (Danio rerio (Zebrafish)).